We begin with the raw amino-acid sequence, 306 residues long: Large ribosomal subunit protein uL2m (306 aa).

Residues 1–60 constitute a mitochondrion transit peptide; it reads MALCALTSALRSLSLASAAITARVPTLLPAAQIQSNVLLQLPPALVSPSYRPVHMSADRS.

Belongs to the universal ribosomal protein uL2 family. Component of the mitochondrial ribosome large subunit (39S) which comprises a 16S rRNA and about 50 distinct proteins.

It localises to the mitochondrion. In Mus musculus (Mouse), this protein is Large ribosomal subunit protein uL2m (Mrpl2).